The sequence spans 478 residues: tRNA (guanine(10)-N(2))-methyltransferase TRMT11 (478 aa).

Positions 457-478 (EERARSEMANAENVKSKGKEDV) are disordered.

It belongs to the class I-like SAM-binding methyltransferase superfamily. TRM11 methyltransferase family. In terms of assembly, part of the heterodimeric TRMT11-TRM112 methyltransferase complex; this complex forms an active tRNA methyltransferase, where TRMT112 acts as an activator of the catalytic subunit TRMT11.

Its subcellular location is the cytoplasm. It carries out the reaction guanosine(10) in tRNA + S-adenosyl-L-methionine = N(2)-methylguanosine(10) in tRNA + S-adenosyl-L-homocysteine + H(+). In terms of biological role, catalytic subunit of the TRMT11-TRM112 methyltransferase complex, that specifically mediates the S-adenosyl-L-methionine-dependent N(2)-methylation of guanosine nucleotide at position 10 (m2G10) in tRNAs. This is one of the major tRNA (guanine-N(2))-methyltransferases. The sequence is that of tRNA (guanine(10)-N(2))-methyltransferase TRMT11 (trmt11.L) from Xenopus laevis (African clawed frog).